The primary structure comprises 73 residues: uncharacterized protein (73 aa).

A run of 2 helical transmembrane segments spans residues 10–30 and 42–62; these read ILLA…YVSA and YSTV…IYLI.

The protein resides in the cell membrane. This is an uncharacterized protein from Archaeoglobus fulgidus (strain ATCC 49558 / DSM 4304 / JCM 9628 / NBRC 100126 / VC-16).